Consider the following 180-residue polypeptide: Large ribosomal subunit protein uL6 (180 aa).

Belongs to the universal ribosomal protein uL6 family. Part of the 50S ribosomal subunit.

This protein binds to the 23S rRNA, and is important in its secondary structure. It is located near the subunit interface in the base of the L7/L12 stalk, and near the tRNA binding site of the peptidyltransferase center. This is Large ribosomal subunit protein uL6 from Anaeromyxobacter sp. (strain K).